The primary structure comprises 858 residues: Leucine--tRNA ligase (858 aa).

The 'HIGH' region signature appears at 42 to 52 (PYPSGRLHMGH). The short motif at 618-622 (KMSKS) is the 'KMSKS' region element. Lysine 621 provides a ligand contact to ATP.

It belongs to the class-I aminoacyl-tRNA synthetase family.

The protein resides in the cytoplasm. It catalyses the reaction tRNA(Leu) + L-leucine + ATP = L-leucyl-tRNA(Leu) + AMP + diphosphate. The chain is Leucine--tRNA ligase from Aeromonas salmonicida (strain A449).